Here is a 313-residue protein sequence, read N- to C-terminus: Aspartate carbamoyltransferase catalytic subunit (313 aa).

Positions 58 and 59 each coordinate carbamoyl phosphate. K86 contributes to the L-aspartate binding site. The carbamoyl phosphate site is built by R108, H136, and Q139. L-aspartate is bound by residues R169 and R224. G265 and P266 together coordinate carbamoyl phosphate.

This sequence belongs to the aspartate/ornithine carbamoyltransferase superfamily. ATCase family. In terms of assembly, heterododecamer (2C3:3R2) of six catalytic PyrB chains organized as two trimers (C3), and six regulatory PyrI chains organized as three dimers (R2).

It catalyses the reaction carbamoyl phosphate + L-aspartate = N-carbamoyl-L-aspartate + phosphate + H(+). It functions in the pathway pyrimidine metabolism; UMP biosynthesis via de novo pathway; (S)-dihydroorotate from bicarbonate: step 2/3. Catalyzes the condensation of carbamoyl phosphate and aspartate to form carbamoyl aspartate and inorganic phosphate, the committed step in the de novo pyrimidine nucleotide biosynthesis pathway. The polypeptide is Aspartate carbamoyltransferase catalytic subunit (Natranaerobius thermophilus (strain ATCC BAA-1301 / DSM 18059 / JW/NM-WN-LF)).